We begin with the raw amino-acid sequence, 370 residues long: ATP synthase gamma chain, chloroplastic (370 aa).

A chloroplast-targeting transit peptide spans Met1–Met55. Residue Cys145 is part of the active site.

Belongs to the ATPase gamma chain family. F-type ATPases have 2 components, CF(1) - the catalytic core - and CF(0) - the membrane proton channel. CF(1) has five subunits: alpha(3), beta(3), gamma(1), delta(1), epsilon(1). CF(0) has four main subunits: a, b, b' and c.

Its subcellular location is the plastid. The protein resides in the chloroplast thylakoid membrane. Functionally, produces ATP from ADP in the presence of a proton gradient across the membrane. The gamma chain is believed to be important in regulating ATPase activity and the flow of protons through the CF(0) complex. This chain is ATP synthase gamma chain, chloroplastic (ATPC), found in Trieres chinensis (Marine centric diatom).